The following is a 217-amino-acid chain: Chaperone protein TorD (217 aa).

It belongs to the TorD/DmsD family. TorD subfamily.

It localises to the cytoplasm. Its function is as follows. Involved in the biogenesis of TorA. Acts on TorA before the insertion of the molybdenum cofactor and, as a result, probably favors a conformation of the apoenzyme that is competent for acquiring the cofactor. The chain is Chaperone protein TorD from Shewanella oneidensis (strain ATCC 700550 / JCM 31522 / CIP 106686 / LMG 19005 / NCIMB 14063 / MR-1).